A 185-amino-acid polypeptide reads, in one-letter code: uncharacterized protein (185 aa).

The segment at 160-185 is disordered; it reads QYTGPAVPSVPTTNLNDIGDPTKTVQ.

This is an uncharacterized protein from Saccharomyces cerevisiae (strain ATCC 204508 / S288c) (Baker's yeast).